Reading from the N-terminus, the 409-residue chain is Arginine deiminase (409 aa).

Catalysis depends on Cys-399, which acts as the Amidino-cysteine intermediate.

The protein belongs to the arginine deiminase family.

It is found in the cytoplasm. It carries out the reaction L-arginine + H2O = L-citrulline + NH4(+). The protein operates within amino-acid degradation; L-arginine degradation via ADI pathway; carbamoyl phosphate from L-arginine: step 1/2. The polypeptide is Arginine deiminase (Borrelia duttonii (strain Ly)).